The primary structure comprises 363 residues: Peptide chain release factor 1 (363 aa).

Gln237 carries the N5-methylglutamine modification. The segment covering 287-299 has biased composition (basic and acidic residues); sequence EQHKEQASTRKEL. The tract at residues 287 to 306 is disordered; that stretch reads EQHKEQASTRKELIGSGDRS.

This sequence belongs to the prokaryotic/mitochondrial release factor family. Methylated by PrmC. Methylation increases the termination efficiency of RF1.

The protein resides in the cytoplasm. Peptide chain release factor 1 directs the termination of translation in response to the peptide chain termination codons UAG and UAA. The polypeptide is Peptide chain release factor 1 (Ruthia magnifica subsp. Calyptogena magnifica).